The primary structure comprises 202 residues: Protein TIFY 11g (202 aa).

Gly residues predominate over residues 1 to 11; the sequence is MDAVGAAGGGA. Residues 1–31 form a disordered region; sequence MDAVGAAGGGAMLPAAARRGQPPQPPCMTTA. Residues 12 to 21 are compositionally biased toward low complexity; that stretch reads MLPAAARRGQ. Residues 101–136 form the Tify domain; that stretch reads ATAPTAPLTIVYGGQVLVFEHYTAEAAEKLVQRTQH. The short motif at 185 to 200 is the Jas element; that stretch reads PIARKASLQRFLQKRK. The Nuclear localization signal signature appears at 187-194; the sequence is ARKASLQR.

It belongs to the TIFY/JAZ family. In terms of processing, ubiquitinated. Targeted for degradation by the SCF(COI1) E3 ubiquitin ligase-proteasome pathway during jasmonate signaling.

The protein localises to the nucleus. Functionally, repressor of jasmonate responses. The sequence is that of Protein TIFY 11g from Oryza sativa subsp. japonica (Rice).